Here is a 406-residue protein sequence, read N- to C-terminus: MARAFLLVLDSFGVGGAPDAERYGDLGANTLGHIAEFCAAGAADRAGLRAGPLKLPNMCSLGLLEIARQASGDIPAGMEPPERIFGLHGSASEISKGKDTPSGHWEIAGTPVTFDWGYFPTEGDAFSPELVEAICRQADIPGILGNCHASGTEIIAALGEEHIRSGKPICYTSSDSVFQIAAHETHFGLDRLIALCETVRKLLDPLNIGRVIARPFIGETVATFERTGNRRDFSVPPPEPTLLDRLVEAGRKVHAIGKIGDIYAHQGVTRVIKANGNAALMDATLHAIDEAENGDLVFTNFVDFDMLYGHRRDVAGYAAALEAFDARIPEIHRKMAPGDIALLTADHGCDPTWRGTDHTRERVPIMAFGPGIRSRDVGIRSSYADIGESIAHHLGIEAGSHGRSFI.

The Mn(2+) site is built by Asp10, Asp305, His310, Asp346, His347, and His358.

The protein belongs to the phosphopentomutase family. It depends on Mn(2+) as a cofactor.

The protein resides in the cytoplasm. It carries out the reaction 2-deoxy-alpha-D-ribose 1-phosphate = 2-deoxy-D-ribose 5-phosphate. It catalyses the reaction alpha-D-ribose 1-phosphate = D-ribose 5-phosphate. It participates in carbohydrate degradation; 2-deoxy-D-ribose 1-phosphate degradation; D-glyceraldehyde 3-phosphate and acetaldehyde from 2-deoxy-alpha-D-ribose 1-phosphate: step 1/2. Functionally, isomerase that catalyzes the conversion of deoxy-ribose 1-phosphate (dRib-1-P) and ribose 1-phosphate (Rib-1-P) to deoxy-ribose 5-phosphate (dRib-5-P) and ribose 5-phosphate (Rib-5-P), respectively. This chain is Phosphopentomutase, found in Agrobacterium fabrum (strain C58 / ATCC 33970) (Agrobacterium tumefaciens (strain C58)).